A 305-amino-acid chain; its full sequence is Protoheme IX farnesyltransferase 2 (305 aa).

7 helical membrane-spanning segments follow: residues 38–58 (LITTFTGMWLALHISGLSFLG), 60–80 (LNTVLLTLIGSSLIIAGSCAV), 115–135 (ILLIALGLIMLLMTTVMAAVI), 157–177 (INTVVGSVSGAVPPLIGWTAV), 181–201 (IGVVAWVLFMILFIWQIPHFL), 236–256 (VACLLPLPFFLGSLGLPIVIL), and 285–305 (FVYSLNYMTIYFVAMVVFTLF).

This sequence belongs to the UbiA prenyltransferase family. Protoheme IX farnesyltransferase subfamily. Interacts with CtaA.

The protein localises to the cell membrane. It catalyses the reaction heme b + (2E,6E)-farnesyl diphosphate + H2O = Fe(II)-heme o + diphosphate. It functions in the pathway porphyrin-containing compound metabolism; heme O biosynthesis; heme O from protoheme: step 1/1. Converts heme B (protoheme IX) to heme O by substitution of the vinyl group on carbon 2 of heme B porphyrin ring with a hydroxyethyl farnesyl side group. This is Protoheme IX farnesyltransferase 2 from Bacillus velezensis (strain DSM 23117 / BGSC 10A6 / LMG 26770 / FZB42) (Bacillus amyloliquefaciens subsp. plantarum).